Reading from the N-terminus, the 82-residue chain is Small ribosomal subunit protein bS16 (82 aa).

This sequence belongs to the bacterial ribosomal protein bS16 family.

The sequence is that of Small ribosomal subunit protein bS16 from Blochmanniella floridana.